The chain runs to 33 residues: Photosystem II reaction center protein Psb30 (33 aa).

Residues 5–25 traverse the membrane as a helical segment; the sequence is ILSQLIAIAVTLFLGPVVVIL.

It belongs to the Psb30/Ycf12 family. In terms of assembly, PSII is composed of 1 copy each of membrane proteins PsbA, PsbB, PsbC, PsbD, PsbE, PsbF, PsbH, PsbI, PsbJ, PsbK, PsbL, PsbM, PsbT, PsbX, PsbY, PsbZ, Psb30/Ycf12, peripheral proteins of the oxygen-evolving complex and a large number of cofactors. It forms dimeric complexes.

Its subcellular location is the plastid. The protein resides in the chloroplast thylakoid membrane. Functionally, a core subunit of photosystem II (PSII), probably helps stabilize the reaction center. The protein is Photosystem II reaction center protein Psb30 of Oedogonium cardiacum (Filamentous green alga).